Consider the following 397-residue polypeptide: 1-deoxy-D-xylulose 5-phosphate reductoisomerase (397 aa).

Residues S10, G11, S12, I13, A36, R37, and N124 each contribute to the NADPH site. 1-deoxy-D-xylulose 5-phosphate is bound at residue K125. An NADPH-binding site is contributed by E126. D150 is a Mn(2+) binding site. Residues S151, E152, S186, and H209 each contribute to the 1-deoxy-D-xylulose 5-phosphate site. Mn(2+) is bound at residue E152. G215 is a binding site for NADPH. Residues S222, N227, K228, and E231 each contribute to the 1-deoxy-D-xylulose 5-phosphate site. E231 contributes to the Mn(2+) binding site.

Belongs to the DXR family. Mg(2+) serves as cofactor. The cofactor is Mn(2+).

The enzyme catalyses 2-C-methyl-D-erythritol 4-phosphate + NADP(+) = 1-deoxy-D-xylulose 5-phosphate + NADPH + H(+). Its pathway is isoprenoid biosynthesis; isopentenyl diphosphate biosynthesis via DXP pathway; isopentenyl diphosphate from 1-deoxy-D-xylulose 5-phosphate: step 1/6. Functionally, catalyzes the NADPH-dependent rearrangement and reduction of 1-deoxy-D-xylulose-5-phosphate (DXP) to 2-C-methyl-D-erythritol 4-phosphate (MEP). This chain is 1-deoxy-D-xylulose 5-phosphate reductoisomerase, found in Aeromonas salmonicida (strain A449).